The following is a 182-amino-acid chain: Adenine phosphoribosyltransferase (182 aa).

It belongs to the purine/pyrimidine phosphoribosyltransferase family. In terms of assembly, homodimer.

It is found in the cytoplasm. The enzyme catalyses AMP + diphosphate = 5-phospho-alpha-D-ribose 1-diphosphate + adenine. It functions in the pathway purine metabolism; AMP biosynthesis via salvage pathway; AMP from adenine: step 1/1. Functionally, catalyzes a salvage reaction resulting in the formation of AMP, that is energically less costly than de novo synthesis. In Pseudomonas fluorescens (strain Pf0-1), this protein is Adenine phosphoribosyltransferase.